The sequence spans 140 residues: Nucleoside diphosphate kinase (140 aa).

Positions 11, 59, 87, 93, 104, and 114 each coordinate ATP. The active-site Pros-phosphohistidine intermediate is H117.

This sequence belongs to the NDK family. In terms of assembly, homotetramer. The cofactor is Mg(2+).

It localises to the cytoplasm. The catalysed reaction is a 2'-deoxyribonucleoside 5'-diphosphate + ATP = a 2'-deoxyribonucleoside 5'-triphosphate + ADP. It carries out the reaction a ribonucleoside 5'-diphosphate + ATP = a ribonucleoside 5'-triphosphate + ADP. Its function is as follows. Major role in the synthesis of nucleoside triphosphates other than ATP. The ATP gamma phosphate is transferred to the NDP beta phosphate via a ping-pong mechanism, using a phosphorylated active-site intermediate. The chain is Nucleoside diphosphate kinase from Jannaschia sp. (strain CCS1).